Reading from the N-terminus, the 440-residue chain is IAA-amino acid hydrolase ILR1-like 4 (440 aa).

Positions 1–23 are cleaved as a signal peptide; that stretch reads MSFFKWVSFVLILHLLNPTLISC. Cys-134, His-136, Glu-170, His-194, and His-397 together coordinate Mn(2+). Residues 437-440 carry the Prevents secretion from ER motif; it reads KDEL.

The protein belongs to the peptidase M20 family. The cofactor is Mn(2+). Expressed in leaves, stems, roots, siliques and flowers. Detected in the vascular tissue of cotyledons and roots, in adult leaves, stems, siliques, petals, hydathodes and in silique abscission zones and funicles.

It is found in the endoplasmic reticulum lumen. The catalysed reaction is a jasmonyl-L-amino acid + H2O = a jasmonate + an L-alpha-amino acid. Functionally, hydrolyzes certain amino acid conjugates of the plant growth regulator indole-3-acetic acid (IAA), including IAA-Ala, IAA-Asn, IAA-Cys, IAA-Glu, IAA-Met, IAA-Ser and IAA-Gly. Has a lower efficiency with IAA-Phe, IAA-Leu and IAA-Val and no activity with IAA-Ile. Important for IAA-Leu hydrolysis in roots. Also hydrolyzes amino acid conjugates of jasmonic acid and 12-hydroxy jasmonic acid. The sequence is that of IAA-amino acid hydrolase ILR1-like 4 from Arabidopsis thaliana (Mouse-ear cress).